We begin with the raw amino-acid sequence, 220 residues long: Thiamine-phosphate synthase (220 aa).

4-amino-2-methyl-5-(diphosphooxymethyl)pyrimidine-binding positions include Gln-39–Lys-43 and Asn-80. Mg(2+) contacts are provided by Asp-81 and Asp-100. Ser-119 contacts 4-amino-2-methyl-5-(diphosphooxymethyl)pyrimidine. 2-[(2R,5Z)-2-carboxy-4-methylthiazol-5(2H)-ylidene]ethyl phosphate is bound at residue Thr-145 to Thr-147. Lys-148 is a binding site for 4-amino-2-methyl-5-(diphosphooxymethyl)pyrimidine. 2-[(2R,5Z)-2-carboxy-4-methylthiazol-5(2H)-ylidene]ethyl phosphate is bound at residue Gly-176.

The protein belongs to the thiamine-phosphate synthase family. Requires Mg(2+) as cofactor.

The enzyme catalyses 2-[(2R,5Z)-2-carboxy-4-methylthiazol-5(2H)-ylidene]ethyl phosphate + 4-amino-2-methyl-5-(diphosphooxymethyl)pyrimidine + 2 H(+) = thiamine phosphate + CO2 + diphosphate. It carries out the reaction 2-(2-carboxy-4-methylthiazol-5-yl)ethyl phosphate + 4-amino-2-methyl-5-(diphosphooxymethyl)pyrimidine + 2 H(+) = thiamine phosphate + CO2 + diphosphate. It catalyses the reaction 4-methyl-5-(2-phosphooxyethyl)-thiazole + 4-amino-2-methyl-5-(diphosphooxymethyl)pyrimidine + H(+) = thiamine phosphate + diphosphate. The protein operates within cofactor biosynthesis; thiamine diphosphate biosynthesis; thiamine phosphate from 4-amino-2-methyl-5-diphosphomethylpyrimidine and 4-methyl-5-(2-phosphoethyl)-thiazole: step 1/1. In terms of biological role, condenses 4-methyl-5-(beta-hydroxyethyl)thiazole monophosphate (THZ-P) and 2-methyl-4-amino-5-hydroxymethyl pyrimidine pyrophosphate (HMP-PP) to form thiamine monophosphate (TMP). This chain is Thiamine-phosphate synthase, found in Mycobacterium marinum (strain ATCC BAA-535 / M).